A 364-amino-acid polypeptide reads, in one-letter code: tRNA-specific 2-thiouridylase MnmA (364 aa).

ATP contacts are provided by residues 6-13 and Leu32; that span reads AMSGGVDS. Cys101 functions as the Nucleophile in the catalytic mechanism. An intrachain disulfide couples Cys101 to Cys193. Gly125 is a binding site for ATP. Positions 143 to 145 are interaction with tRNA; it reads KDQ. Cys193 functions as the Cysteine persulfide intermediate in the catalytic mechanism.

The protein belongs to the MnmA/TRMU family.

It localises to the cytoplasm. The enzyme catalyses S-sulfanyl-L-cysteinyl-[protein] + uridine(34) in tRNA + AH2 + ATP = 2-thiouridine(34) in tRNA + L-cysteinyl-[protein] + A + AMP + diphosphate + H(+). In terms of biological role, catalyzes the 2-thiolation of uridine at the wobble position (U34) of tRNA, leading to the formation of s(2)U34. This is tRNA-specific 2-thiouridylase MnmA from Rhodococcus jostii (strain RHA1).